Consider the following 256-residue polypeptide: Putative F-box protein At3g51171 (256 aa).

In terms of domain architecture, F-box spans 1-44; that stretch reads MVPLPWELEEDILSRLAAQSLVRFRSVCKRWNYLFDEKSFIKNH.

The protein is Putative F-box protein At3g51171 of Arabidopsis thaliana (Mouse-ear cress).